We begin with the raw amino-acid sequence, 932 residues long: 2-oxoglutarate dehydrogenase E1 component (932 aa).

It belongs to the alpha-ketoglutarate dehydrogenase family. As to quaternary structure, homodimer. Part of the 2-oxoglutarate dehydrogenase (OGDH) complex composed of E1 (2-oxoglutarate dehydrogenase), E2 (dihydrolipoamide succinyltransferase) and E3 (dihydrolipoamide dehydrogenase); the complex contains multiple copies of the three enzymatic components (E1, E2 and E3). Thiamine diphosphate serves as cofactor.

It carries out the reaction N(6)-[(R)-lipoyl]-L-lysyl-[protein] + 2-oxoglutarate + H(+) = N(6)-[(R)-S(8)-succinyldihydrolipoyl]-L-lysyl-[protein] + CO2. Its function is as follows. E1 component of the 2-oxoglutarate dehydrogenase (OGDH) complex which catalyzes the decarboxylation of 2-oxoglutarate, the first step in the conversion of 2-oxoglutarate to succinyl-CoA and CO(2). In Staphylococcus aureus (strain JH9), this protein is 2-oxoglutarate dehydrogenase E1 component.